Here is a 247-residue protein sequence, read N- to C-terminus: 14-3-3 protein gamma-1 (247 aa).

This sequence belongs to the 14-3-3 family. Homodimer, and heterodimer with other family members.

The protein localises to the cytoplasm. Adapter protein implicated in the regulation of a large spectrum of both general and specialized signaling pathways. Binds to a large number of partners, usually by recognition of a phosphoserine or phosphothreonine motif. Binding generally results in the modulation of the activity of the binding partner. This Danio rerio (Zebrafish) protein is 14-3-3 protein gamma-1 (ywhag1).